A 210-amino-acid chain; its full sequence is Ras-related protein SEC4 (210 aa).

21 to 28 (GDSGVGKS) serves as a coordination point for GTP. The short motif at 43–51 (FITTIGIDF) is the Effector region element. GTP is bound by residues 69–73 (DTAGQ) and 127–130 (NKCD). 2 S-geranylgeranyl cysteine lipidation sites follow: cysteine 209 and cysteine 210.

This sequence belongs to the small GTPase superfamily. Rab family.

Its subcellular location is the cytoplasmic vesicle. The protein localises to the secretory vesicle membrane. The protein resides in the cell membrane. In terms of biological role, involved in exocytosis. Maybe by regulating the binding and fusion of secretory vesicles with the cell surface. The GTP-bound form of SEC4 may interact with an effector, thereby stimulating its activity and leading to exocytotic fusion. SEC4 may be an upstream activator of the 19.5S SEC8/SEC15 particle. SEC4 probably interacts directly with SEC8; it could serve as the attachment site for the SEC8/SEC15 particle. In Candida albicans (strain SC5314 / ATCC MYA-2876) (Yeast), this protein is Ras-related protein SEC4 (SEC4).